Consider the following 646-residue polypeptide: Cysteine-rich receptor-like protein kinase 37 (646 aa).

The N-terminal stretch at 1–26 is a signal peptide; that stretch reads MGKSCVVTSSFSLLLLFLQTLKYVHA. Gnk2-homologous domains are found at residues 27 to 132 and 142 to 252; these read GFIC…NHST and TINP…LYPY. Residues 27–287 lie on the Extracellular side of the membrane; sequence GFICYGDFFN…RDEKSFQGSN (261 aa). N-linked (GlcNAc...) asparagine glycosylation is found at asparagine 62, asparagine 129, asparagine 169, and asparagine 180. The chain crosses the membrane as a helical span at residues 288–308; it reads IAIIVVPSVINLIIFVVLIFS. The Cytoplasmic segment spans residues 309–646; sequence WKRKQSHTII…LTRPSLSLGH (338 aa). In terms of domain architecture, Protein kinase spans 345–626; the sequence is FSLENKLGQG…LFWLERHATI (282 aa). ATP contacts are provided by residues 351–359 and lysine 373; that span reads LGQGGFGSV. Tyrosine 418 is subject to Phosphotyrosine. The Proton acceptor role is filled by aspartate 470. Residue serine 474 is modified to Phosphoserine. Residue threonine 510 is modified to Phosphothreonine. Tyrosine 518 carries the post-translational modification Phosphotyrosine.

It belongs to the protein kinase superfamily. Ser/Thr protein kinase family. CRK subfamily.

It localises to the membrane. The catalysed reaction is L-seryl-[protein] + ATP = O-phospho-L-seryl-[protein] + ADP + H(+). It catalyses the reaction L-threonyl-[protein] + ATP = O-phospho-L-threonyl-[protein] + ADP + H(+). The chain is Cysteine-rich receptor-like protein kinase 37 (CRK37) from Arabidopsis thaliana (Mouse-ear cress).